A 463-amino-acid polypeptide reads, in one-letter code: D-inositol 3-phosphate glycosyltransferase (463 aa).

1D-myo-inositol 3-phosphate is bound at residue H40. Residues 46–47 and G54 each bind UDP-N-acetyl-alpha-D-glucosamine; that span reads QP. 1D-myo-inositol 3-phosphate is bound by residues 51–56, K109, Y142, T166, and R186; that span reads DAGGMN. 3 residues coordinate UDP-N-acetyl-alpha-D-glucosamine: R260, K265, and Q318. Mg(2+) is bound by residues F327, H328, and V330. E340 and E348 together coordinate UDP-N-acetyl-alpha-D-glucosamine. T354 lines the Mg(2+) pocket. The tract at residues 443 to 463 is disordered; the sequence is VRDPVAARKPRRWTARRGVGA.

It belongs to the glycosyltransferase group 1 family. MshA subfamily. In terms of assembly, homodimer.

The enzyme catalyses 1D-myo-inositol 3-phosphate + UDP-N-acetyl-alpha-D-glucosamine = 1D-myo-inositol 2-acetamido-2-deoxy-alpha-D-glucopyranoside 3-phosphate + UDP + H(+). Catalyzes the transfer of a N-acetyl-glucosamine moiety to 1D-myo-inositol 3-phosphate to produce 1D-myo-inositol 2-acetamido-2-deoxy-glucopyranoside 3-phosphate in the mycothiol biosynthesis pathway. This Mycobacterium ulcerans (strain Agy99) protein is D-inositol 3-phosphate glycosyltransferase.